A 526-amino-acid polypeptide reads, in one-letter code: Non-reducing end alpha-L-arabinofuranosidase BoGH43A (526 aa).

A signal peptide spans Met-1–Ala-20. Catalysis depends on Asp-34, which acts as the Proton acceptor. Glu-189 (proton donor) is an active-site residue.

Belongs to the glycosyl hydrolase 43 family.

The protein localises to the periplasm. The catalysed reaction is Hydrolysis of terminal non-reducing alpha-L-arabinofuranoside residues in alpha-L-arabinosides.. The protein operates within glucan metabolism; xyloglucan degradation. In terms of biological role, alpha-L-arabinofuranosidase involved in xyloglucan degradation by mediating the cleavage of terminal non-reducing alpha-L-arabinofuranoside residues in xyloglucan branches, converting the 'S' units to 'X' units. This chain is Non-reducing end alpha-L-arabinofuranosidase BoGH43A, found in Bacteroides ovatus (strain ATCC 8483 / DSM 1896 / JCM 5824 / BCRC 10623 / CCUG 4943 / NCTC 11153).